Here is a 101-residue protein sequence, read N- to C-terminus: DNA-binding protein HU (101 aa).

It belongs to the bacterial histone-like protein family. In terms of assembly, homodimer.

Histone-like DNA-binding protein which is capable of wrapping DNA to stabilize it, and thus to prevent its denaturation under extreme environmental conditions. The sequence is that of DNA-binding protein HU (hup) from Rickettsia bellii (strain RML369-C).